The sequence spans 159 residues: MTTFNGKINGNGLKIGIAVARFNAFVTQQLLTGAQESLVQHGVNETDIDVAWVPGAFEIPLTVQKMITTKRYDGVIALGAVIRGATAHFDYVCSGVTTGIATVSLATDTPIMFGVLTTDTIEQAMDRAGFKSGNKGADCAVSLLETLDVQRAILKADLA.

Residues F22, 56–58 (AFE), and 80–82 (AVI) contribute to the 5-amino-6-(D-ribitylamino)uracil site. Position 85–86 (85–86 (AT)) interacts with (2S)-2-hydroxy-3-oxobutyl phosphate. Catalysis depends on H88, which acts as the Proton donor. Residue F113 coordinates 5-amino-6-(D-ribitylamino)uracil. Residue R127 coordinates (2S)-2-hydroxy-3-oxobutyl phosphate.

It belongs to the DMRL synthase family.

It catalyses the reaction (2S)-2-hydroxy-3-oxobutyl phosphate + 5-amino-6-(D-ribitylamino)uracil = 6,7-dimethyl-8-(1-D-ribityl)lumazine + phosphate + 2 H2O + H(+). It functions in the pathway cofactor biosynthesis; riboflavin biosynthesis; riboflavin from 2-hydroxy-3-oxobutyl phosphate and 5-amino-6-(D-ribitylamino)uracil: step 1/2. Its function is as follows. Catalyzes the formation of 6,7-dimethyl-8-ribityllumazine by condensation of 5-amino-6-(D-ribitylamino)uracil with 3,4-dihydroxy-2-butanone 4-phosphate. This is the penultimate step in the biosynthesis of riboflavin. This is 6,7-dimethyl-8-ribityllumazine synthase from Lactiplantibacillus plantarum (strain ATCC BAA-793 / NCIMB 8826 / WCFS1) (Lactobacillus plantarum).